A 330-amino-acid polypeptide reads, in one-letter code: MSQIVVCAMYKFVTLEDYEAMRQPLLDTMIKNNVKGTLLLANEGINGTVAGSREGVNALLAYLKSDSRLADIDYKESYHQEMPFYRSKVKLKKEIVTLGIEEIDPNKVCGKYVEPKDWNALISDPETILVDTRNDYEIEIGTFKNAINPSTETFREFPEYVDKNLDPKKHKKVAMFCTGGIRCEKSTALMKAKGFDEVYHLKGGILKYLEEVPKEESMWEGECFVFDSRVAVNHDLEKGSYDQCFACRMPITEEDKKRPEYVKGISCHHCYDKVTEEQKARFAEREKQSQLAAERGFSHVGDDAKKLAKLNKQQKQQAKEIARKKAKSEI.

The 95-residue stretch at 123–217 folds into the Rhodanese domain; that stretch reads SDPETILVDT…YLEEVPKEES (95 aa). Cys177 functions as the Cysteine persulfide intermediate in the catalytic mechanism. The tract at residues 310–330 is disordered; the sequence is LNKQQKQQAKEIARKKAKSEI. The segment covering 317–330 has biased composition (basic and acidic residues); sequence QAKEIARKKAKSEI.

The protein belongs to the TrhO family.

The catalysed reaction is uridine(34) in tRNA + AH2 + O2 = 5-hydroxyuridine(34) in tRNA + A + H2O. In terms of biological role, catalyzes oxygen-dependent 5-hydroxyuridine (ho5U) modification at position 34 in tRNAs. The polypeptide is tRNA uridine(34) hydroxylase (Francisella philomiragia subsp. philomiragia (strain ATCC 25017 / CCUG 19701 / FSC 153 / O#319-036)).